Reading from the N-terminus, the 527-residue chain is Rhamnogalacturonate lyase A (527 aa).

Residues 1-20 (MLSKTFLLSSAVLWARVANA) form the signal peptide. N27 and N46 each carry an N-linked (GlcNAc...) asparagine glycan. 2 cysteine pairs are disulfide-bonded: C50–C93 and C184–C193. N-linked (GlcNAc...) asparagine glycosylation occurs at N351.

The protein belongs to the polysaccharide lyase 4 family.

Its subcellular location is the secreted. It catalyses the reaction Endotype eliminative cleavage of L-alpha-rhamnopyranosyl-(1-&gt;4)-alpha-D-galactopyranosyluronic acid bonds of rhamnogalacturonan I domains in ramified hairy regions of pectin leaving L-rhamnopyranose at the reducing end and 4-deoxy-4,5-unsaturated D-galactopyranosyluronic acid at the non-reducing end.. Pectinolytic enzymes consist of four classes of enzymes: pectin lyase, polygalacturonase, pectin methylesterase and rhamnogalacturonase. Degrades the rhamnogalacturonan I (RG-I) backbone of pectin. Active against linseed rhamnogalacturonan. This chain is Rhamnogalacturonate lyase A (rglA), found in Emericella nidulans (strain FGSC A4 / ATCC 38163 / CBS 112.46 / NRRL 194 / M139) (Aspergillus nidulans).